The following is a 327-amino-acid chain: Undecaprenyl-phosphate 4-deoxy-4-formamido-L-arabinose transferase (327 aa).

Residues 1–235 (MFDAAPIKKV…TCLTTTPLRL (235 aa)) are Cytoplasmic-facing. Residues 236 to 256 (LSLLGSVIAIGGFSLSVLLIV) traverse the membrane as a helical segment. The Periplasmic segment spans residues 257–269 (LRLALGPQWAAEG). Residues 270–290 (VFMLFAVLFTFIGAQFIGMGL) traverse the membrane as a helical segment. Residues 291–327 (LGEYIGRIYNDVRARPRYFVQQVIYPESTPFTEESHQ) are Cytoplasmic-facing.

It belongs to the glycosyltransferase 2 family.

The protein localises to the cell inner membrane. It catalyses the reaction UDP-4-deoxy-4-formamido-beta-L-arabinose + di-trans,octa-cis-undecaprenyl phosphate = 4-deoxy-4-formamido-alpha-L-arabinopyranosyl di-trans,octa-cis-undecaprenyl phosphate + UDP. It participates in glycolipid biosynthesis; 4-amino-4-deoxy-alpha-L-arabinose undecaprenyl phosphate biosynthesis; 4-amino-4-deoxy-alpha-L-arabinose undecaprenyl phosphate from UDP-4-deoxy-4-formamido-beta-L-arabinose and undecaprenyl phosphate: step 1/2. Its pathway is bacterial outer membrane biogenesis; lipopolysaccharide biosynthesis. Functionally, catalyzes the transfer of 4-deoxy-4-formamido-L-arabinose from UDP to undecaprenyl phosphate. The modified arabinose is attached to lipid A and is required for resistance to polymyxin and cationic antimicrobial peptides. The protein is Undecaprenyl-phosphate 4-deoxy-4-formamido-L-arabinose transferase of Salmonella dublin (strain CT_02021853).